Reading from the N-terminus, the 212-residue chain is Thymidylate kinase (212 aa).

11–18 (GPEGAGKT) provides a ligand contact to ATP.

This sequence belongs to the thymidylate kinase family.

The catalysed reaction is dTMP + ATP = dTDP + ADP. Phosphorylation of dTMP to form dTDP in both de novo and salvage pathways of dTTP synthesis. The chain is Thymidylate kinase from Streptococcus pneumoniae (strain Taiwan19F-14).